The chain runs to 219 residues: Thiamine-phosphate synthase (219 aa).

Residues 45 to 49 (QYREK) and Asn-77 each bind 4-amino-2-methyl-5-(diphosphooxymethyl)pyrimidine. Asp-78 and Asp-97 together coordinate Mg(2+). Thr-116 serves as a coordination point for 4-amino-2-methyl-5-(diphosphooxymethyl)pyrimidine. 142-144 (SFT) contacts 2-[(2R,5Z)-2-carboxy-4-methylthiazol-5(2H)-ylidene]ethyl phosphate. Residue Lys-145 participates in 4-amino-2-methyl-5-(diphosphooxymethyl)pyrimidine binding. 2-[(2R,5Z)-2-carboxy-4-methylthiazol-5(2H)-ylidene]ethyl phosphate-binding positions include Gly-173 and 193 to 194 (VT).

Belongs to the thiamine-phosphate synthase family. Requires Mg(2+) as cofactor.

The enzyme catalyses 2-[(2R,5Z)-2-carboxy-4-methylthiazol-5(2H)-ylidene]ethyl phosphate + 4-amino-2-methyl-5-(diphosphooxymethyl)pyrimidine + 2 H(+) = thiamine phosphate + CO2 + diphosphate. It carries out the reaction 2-(2-carboxy-4-methylthiazol-5-yl)ethyl phosphate + 4-amino-2-methyl-5-(diphosphooxymethyl)pyrimidine + 2 H(+) = thiamine phosphate + CO2 + diphosphate. The catalysed reaction is 4-methyl-5-(2-phosphooxyethyl)-thiazole + 4-amino-2-methyl-5-(diphosphooxymethyl)pyrimidine + H(+) = thiamine phosphate + diphosphate. Its pathway is cofactor biosynthesis; thiamine diphosphate biosynthesis; thiamine phosphate from 4-amino-2-methyl-5-diphosphomethylpyrimidine and 4-methyl-5-(2-phosphoethyl)-thiazole: step 1/1. In terms of biological role, condenses 4-methyl-5-(beta-hydroxyethyl)thiazole monophosphate (THZ-P) and 2-methyl-4-amino-5-hydroxymethyl pyrimidine pyrophosphate (HMP-PP) to form thiamine monophosphate (TMP). The chain is Thiamine-phosphate synthase from Caldicellulosiruptor bescii (strain ATCC BAA-1888 / DSM 6725 / KCTC 15123 / Z-1320) (Anaerocellum thermophilum).